The primary structure comprises 603 residues: Aspartate--tRNA(Asp/Asn) ligase (603 aa).

The interval 205–208 (QLFK) is aspartate. Residue arginine 227 coordinates L-aspartate. Residues 227-229 (RDE) and glutamine 236 contribute to the ATP site. An L-aspartate-binding site is contributed by histidine 463. Residue glutamate 497 coordinates ATP. Arginine 504 serves as a coordination point for L-aspartate. 549–552 (GMDR) lines the ATP pocket.

This sequence belongs to the class-II aminoacyl-tRNA synthetase family. Type 1 subfamily. Homodimer.

The protein resides in the cytoplasm. It carries out the reaction tRNA(Asx) + L-aspartate + ATP = L-aspartyl-tRNA(Asx) + AMP + diphosphate. Aspartyl-tRNA synthetase with relaxed tRNA specificity since it is able to aspartylate not only its cognate tRNA(Asp) but also tRNA(Asn). Reaction proceeds in two steps: L-aspartate is first activated by ATP to form Asp-AMP and then transferred to the acceptor end of tRNA(Asp/Asn). In Anaeromyxobacter dehalogenans (strain 2CP-C), this protein is Aspartate--tRNA(Asp/Asn) ligase.